Reading from the N-terminus, the 239-residue chain is Putative CRISPR-associated endoribonuclease-like protein Cas6nc (239 aa).

Belongs to the CRISPR-associated protein Cas6/Cse3/CasE family. Monomer; homodimer when crystallized in the presence of crRNA. Varying the crRNA sequence varies degree of oligomerization and structure.

Its function is as follows. CRISPR (clustered regularly interspaced short palindromic repeat), is an adaptive immune system that provides protection against mobile genetic elements (viruses, transposable elements and conjugative plasmids). CRISPR clusters contain sequences complementary to antecedent mobile elements and target invading nucleic acids. CRISPR clusters are transcribed and processed into CRISPR RNA (crRNA), also called psiRNA (prokaryotic silencing) in this organism (Potential). The sequence is that of Putative CRISPR-associated endoribonuclease-like protein Cas6nc (cas6nc) from Pyrococcus horikoshii (strain ATCC 700860 / DSM 12428 / JCM 9974 / NBRC 100139 / OT-3).